Here is a 65-residue protein sequence, read N- to C-terminus: MPKMKTKSSAKKRFKVTGSGKIKRKHAFKSHILTKKSKKRKLALTHSALVHKTDEKSIKQQLRII.

The tract at residues 1–22 (MPKMKTKSSAKKRFKVTGSGKI) is disordered.

Belongs to the bacterial ribosomal protein bL35 family.

In Flavobacterium johnsoniae (strain ATCC 17061 / DSM 2064 / JCM 8514 / BCRC 14874 / CCUG 350202 / NBRC 14942 / NCIMB 11054 / UW101) (Cytophaga johnsonae), this protein is Large ribosomal subunit protein bL35.